Consider the following 211-residue polypeptide: Histidine biosynthesis bifunctional protein HisIE (211 aa).

The phosphoribosyl-AMP cyclohydrolase stretch occupies residues 1 to 122; the sequence is MSFKTAEVSS…DPQEESQMVW (122 aa). Residues 123-211 form a phosphoribosyl-ATP pyrophosphohydrolase region; sequence LHQLEQLLAA…VINKLKERHK (89 aa).

This sequence in the N-terminal section; belongs to the PRA-CH family. It in the C-terminal section; belongs to the PRA-PH family.

It localises to the cytoplasm. It catalyses the reaction 1-(5-phospho-beta-D-ribosyl)-ATP + H2O = 1-(5-phospho-beta-D-ribosyl)-5'-AMP + diphosphate + H(+). It carries out the reaction 1-(5-phospho-beta-D-ribosyl)-5'-AMP + H2O = 1-(5-phospho-beta-D-ribosyl)-5-[(5-phospho-beta-D-ribosylamino)methylideneamino]imidazole-4-carboxamide. Its pathway is amino-acid biosynthesis; L-histidine biosynthesis; L-histidine from 5-phospho-alpha-D-ribose 1-diphosphate: step 2/9. It functions in the pathway amino-acid biosynthesis; L-histidine biosynthesis; L-histidine from 5-phospho-alpha-D-ribose 1-diphosphate: step 3/9. This Vibrio vulnificus (strain CMCP6) protein is Histidine biosynthesis bifunctional protein HisIE.